Reading from the N-terminus, the 371-residue chain is MELSEIKRNLEEYQNHLNQIRGSLDLENKETNIQEYEEMMTDPDFWNDQTKAQDIIDKNNALKSIVNGYYQLTNAVDDMSATRELLQEEYDEDMKIELEEEVQQFEEQIDQYELQLLLDGPHDANNAILELHPGAGGTESQDWVSMLLRMYQRYCEQNGFKVETVDYLPGDEAGVKSVTLLIKGHNAYGYLKAEKGVHRLVRISPFDSSGRRHTSFASCDVIPDFNNDEIEIEINPDDITVDTFRASGAGGQHINKTESAIRITHHPTGIVVNNQNERSQIKNREAAMKMLKSKLYQLKLEEQEQEMAEIRGEQKDIGWGSQIRSYVFHPYSMIKDHRTNEETGKVDAVMDGEIGPFIEAYLRKEMDSRDV.

N5-methylglutamine is present on glutamine 252.

This sequence belongs to the prokaryotic/mitochondrial release factor family. Post-translationally, methylated by PrmC. Methylation increases the termination efficiency of RF2.

The protein resides in the cytoplasm. Functionally, peptide chain release factor 2 directs the termination of translation in response to the peptide chain termination codons UGA and UAA. In Staphylococcus epidermidis (strain ATCC 35984 / DSM 28319 / BCRC 17069 / CCUG 31568 / BM 3577 / RP62A), this protein is Peptide chain release factor 2.